Reading from the N-terminus, the 359-residue chain is Zinc finger CCCH domain-containing protein 20 (359 aa).

3 C3H1-type zinc fingers span residues 75–107 (TCDH…HPGE), 119–145 (YSGT…HGVF), and 153–177 (RYRT…HSPD). Disordered stretches follow at residues 207-226 (SISP…SDSS) and 334-359 (MGRI…DLVM).

The protein is Zinc finger CCCH domain-containing protein 20 of Arabidopsis thaliana (Mouse-ear cress).